A 514-amino-acid chain; its full sequence is 2,3-bisphosphoglycerate-independent phosphoglycerate mutase (514 aa).

Positions 14 and 64 each coordinate Mn(2+). The active-site Phosphoserine intermediate is the Ser64. Residues His125, 155–156 (RD), Arg187, Arg193, 263–266 (RADR), and Lys336 each bind substrate. The Mn(2+) site is built by Asp403, His407, Asp444, His445, and His463.

This sequence belongs to the BPG-independent phosphoglycerate mutase family. Monomer. The cofactor is Mn(2+).

It catalyses the reaction (2R)-2-phosphoglycerate = (2R)-3-phosphoglycerate. Its pathway is carbohydrate degradation; glycolysis; pyruvate from D-glyceraldehyde 3-phosphate: step 3/5. Functionally, catalyzes the interconversion of 2-phosphoglycerate and 3-phosphoglycerate. The sequence is that of 2,3-bisphosphoglycerate-independent phosphoglycerate mutase from Shewanella sp. (strain MR-4).